Consider the following 858-residue polypeptide: Lysine-specific demethylase JMJ706 (858 aa).

One can recognise a JmjN domain in the interval 103–144; the sequence is CPVYYPTKEEFEDPIGYIQKIAPVASKYGICKIVSPVSASVP. The JmjC domain occupies 250-420; the sequence is KSNWNLKNFS…LGSVASRRYA (171 aa). Fe cation contacts are provided by His-293, Glu-295, and His-388. Positions 737–746 are enriched in basic and acidic residues; it reads QHNKRPEDYG. Disordered regions lie at residues 737 to 791 and 829 to 858; these read QHNK…SAKQ and SSST…WPAI. The segment covering 829-844 has biased composition (polar residues); that stretch reads SSSTNRVVEQGSSGQR.

The cofactor is Fe(2+).

Its subcellular location is the nucleus. It catalyses the reaction N(6),N(6),N(6)-trimethyl-L-lysyl(9)-[histone H3] + 2 2-oxoglutarate + 2 O2 = N(6)-methyl-L-lysyl(9)-[histone H3] + 2 formaldehyde + 2 succinate + 2 CO2. Its function is as follows. Histone demethylase that demethylates 'Lys-9' (H3K9me) of histone H3 with a specific activity for H3K9me3 and H3K9me2. No activity on H3K4me3, H3K9me1, H3K27me2 and H3K36me3/2. Involved in the control of floral organ development by demethylating H3K9me3 and H3K9me2 in the promoter regions of DH1 and MADS47. The 'Lys-9' demethylation of these two genes is required for induction of their expression. The polypeptide is Lysine-specific demethylase JMJ706 (JMJ706) (Oryza sativa subsp. japonica (Rice)).